An 82-amino-acid chain; its full sequence is U6 snRNA-associated Sm-like protein LSm6 (82 aa).

One can recognise a Sm domain in the interval 13-82 (DPSGFLSEII…GNNVMYISAD (70 aa)).

The protein belongs to the snRNP Sm proteins family. SmF/LSm6 subfamily. As to quaternary structure, component of the heptameric LSM1-LSM7 complex, which consists of snr-1/lsm1, snr-2/lsm2, snr-3/lsm3, snr-4/lsm4, snr-5/lsm5, snr-6/lsm6 and snr-7/lsm7. Component of the heptameric LSM2-LSM8 complex, which consists of snr-2/lsm2, snr-3/lsm3, snr-4/lsm4, snr-5/lsm5, snr-6/lsm6, snr-7/lsm7 and snr-8/lsm8. The LSm subunits form a seven-membered ring structure with a doughnut shape.

The protein localises to the cytoplasm. It localises to the nucleus. In terms of biological role, component of LSm protein complexes, which are involved in RNA processing and may function in a chaperone-like manner, facilitating the efficient association of RNA processing factors with their substrates. Component of the cytoplasmic LSM1-LSM7 complex, which is thought to be involved in mRNA degradation by activating the decapping step in the 5'-to-3' mRNA decay pathway. Component of the nuclear LSM2-LSM8 complex, which is involved in splicing of nuclear mRNAs. LSM2-LSM8 associates with multiple snRNP complexes containing the U6 snRNA (U4/U6 di-snRNP, spliceosomal U4/U6.U5 tri-snRNP, and free U6 snRNP). It binds directly to the 3'-terminal U-tract of U6 snRNA and plays a role in the biogenesis and stability of the U6 snRNP and U4/U6 snRNP complexes. LSM2-LSM8 probably also is involved degradation of nuclear pre-mRNA by targeting them for decapping, and in processing of pre-tRNAs, pre-rRNAs and U3 snoRNA. The protein is U6 snRNA-associated Sm-like protein LSm6 (snr-6) of Neurospora crassa (strain ATCC 24698 / 74-OR23-1A / CBS 708.71 / DSM 1257 / FGSC 987).